A 511-amino-acid chain; its full sequence is Cytochrome P450 4B1 (511 aa).

Glu315 provides a ligand contact to heme. A Phosphoserine modification is found at Ser436. Position 453 (Cys453) interacts with heme.

The protein belongs to the cytochrome P450 family. The cofactor is heme. As to expression, detected in the liver and lung (at protein level).

The protein resides in the endoplasmic reticulum membrane. It localises to the microsome membrane. The enzyme catalyses an organic molecule + reduced [NADPH--hemoprotein reductase] + O2 = an alcohol + oxidized [NADPH--hemoprotein reductase] + H2O + H(+). In terms of biological role, cytochromes P450 are a group of heme-thiolate monooxygenases. In liver microsomes, this enzyme is involved in an NADPH-dependent electron transport pathway. It oxidizes a variety of structurally unrelated compounds, including steroids, fatty acids, and xenobiotics. The polypeptide is Cytochrome P450 4B1 (CYP4B1) (Homo sapiens (Human)).